The sequence spans 440 residues: uncharacterized protein (440 aa).

This is an uncharacterized protein from Saccharolobus islandicus (Sulfolobus islandicus).